Here is a 49-residue protein sequence, read N- to C-terminus: MVEAIYRCAKCGREVKIDLSVTRDLRCPYCGSKILYKPRPKVPRRVKAI.

Zn(2+) is bound by residues Cys-11, Cys-27, and Cys-30.

Belongs to the archaeal Rpo12/eukaryotic RPC10 RNA polymerase subunit family. Part of the RNA polymerase complex. It depends on Zn(2+) as a cofactor.

It is found in the cytoplasm. The catalysed reaction is RNA(n) + a ribonucleoside 5'-triphosphate = RNA(n+1) + diphosphate. DNA-dependent RNA polymerase (RNAP) catalyzes the transcription of DNA into RNA using the four ribonucleoside triphosphates as substrates. This Pyrococcus abyssi (strain GE5 / Orsay) protein is DNA-directed RNA polymerase subunit Rpo12.